The following is a 326-amino-acid chain: Phospho-N-acetylmuramoyl-pentapeptide-transferase (326 aa).

Transmembrane regions (helical) follow at residues Gly-5 to Ile-25, Thr-51 to Ala-71, Val-82 to Ile-102, Ile-122 to Tyr-142, Leu-148 to Ser-168, Leu-180 to Ile-200, Val-204 to Ala-224, Val-229 to Leu-249, Leu-252 to Ile-272, and Val-304 to Val-324.

Belongs to the glycosyltransferase 4 family. MraY subfamily. Mg(2+) serves as cofactor.

Its subcellular location is the cell membrane. It catalyses the reaction UDP-N-acetyl-alpha-D-muramoyl-L-alanyl-gamma-D-glutamyl-meso-2,6-diaminopimeloyl-D-alanyl-D-alanine + di-trans,octa-cis-undecaprenyl phosphate = di-trans,octa-cis-undecaprenyl diphospho-N-acetyl-alpha-D-muramoyl-L-alanyl-D-glutamyl-meso-2,6-diaminopimeloyl-D-alanyl-D-alanine + UMP. It participates in cell wall biogenesis; peptidoglycan biosynthesis. Catalyzes the initial step of the lipid cycle reactions in the biosynthesis of the cell wall peptidoglycan: transfers peptidoglycan precursor phospho-MurNAc-pentapeptide from UDP-MurNAc-pentapeptide onto the lipid carrier undecaprenyl phosphate, yielding undecaprenyl-pyrophosphoryl-MurNAc-pentapeptide, known as lipid I. The protein is Phospho-N-acetylmuramoyl-pentapeptide-transferase of Oceanobacillus iheyensis (strain DSM 14371 / CIP 107618 / JCM 11309 / KCTC 3954 / HTE831).